We begin with the raw amino-acid sequence, 347 residues long: KIN17-like protein KLP (347 aa).

Residues lysine 222 to arginine 225 carry the Nuclear localization signal (NLS) motif.

Belongs to the KIN17 family.

It localises to the cytoplasm. It is found in the nucleus. Its function is as follows. May act as repressor of root growth during copper excess and of hypocotyl growth in the dark. This Arabidopsis thaliana (Mouse-ear cress) protein is KIN17-like protein KLP.